The sequence spans 489 residues: UDP-N-acetylmuramoyl-L-alanyl-D-glutamate--2,6-diaminopimelate ligase (489 aa).

S30 is a binding site for UDP-N-acetyl-alpha-D-muramoyl-L-alanyl-D-glutamate. 110–116 (GTNGKTT) lines the ATP pocket. UDP-N-acetyl-alpha-D-muramoyl-L-alanyl-D-glutamate contacts are provided by residues 152-153 (TT), S179, and R187. K219 is subject to N6-carboxylysine. Meso-2,6-diaminopimelate-binding positions include R381, 405-408 (DNPR), G458, and E462. Positions 405–408 (DNPR) match the Meso-diaminopimelate recognition motif motif.

It belongs to the MurCDEF family. MurE subfamily. Requires Mg(2+) as cofactor. Post-translationally, carboxylation is probably crucial for Mg(2+) binding and, consequently, for the gamma-phosphate positioning of ATP.

The protein localises to the cytoplasm. It carries out the reaction UDP-N-acetyl-alpha-D-muramoyl-L-alanyl-D-glutamate + meso-2,6-diaminopimelate + ATP = UDP-N-acetyl-alpha-D-muramoyl-L-alanyl-gamma-D-glutamyl-meso-2,6-diaminopimelate + ADP + phosphate + H(+). The protein operates within cell wall biogenesis; peptidoglycan biosynthesis. Catalyzes the addition of meso-diaminopimelic acid to the nucleotide precursor UDP-N-acetylmuramoyl-L-alanyl-D-glutamate (UMAG) in the biosynthesis of bacterial cell-wall peptidoglycan. The chain is UDP-N-acetylmuramoyl-L-alanyl-D-glutamate--2,6-diaminopimelate ligase from Syntrophomonas wolfei subsp. wolfei (strain DSM 2245B / Goettingen).